The sequence spans 118 residues: Putative pterin-4-alpha-carbinolamine dehydratase (118 aa).

The protein belongs to the pterin-4-alpha-carbinolamine dehydratase family.

The catalysed reaction is (4aS,6R)-4a-hydroxy-L-erythro-5,6,7,8-tetrahydrobiopterin = (6R)-L-erythro-6,7-dihydrobiopterin + H2O. This is Putative pterin-4-alpha-carbinolamine dehydratase from Xanthomonas campestris pv. campestris (strain 8004).